The primary structure comprises 846 residues: Aminopeptidase N (846 aa).

Substrate contacts are provided by residues Glu-120 and 252-256 (GAMEN). His-288 is a binding site for Zn(2+). The active-site Proton acceptor is Glu-289. The Zn(2+) site is built by His-292 and Glu-311.

It belongs to the peptidase M1 family. In terms of assembly, monomer. The cofactor is Zn(2+).

It is found in the cytoplasm. It carries out the reaction Release of an N-terminal amino acid, Xaa-|-Yaa- from a peptide, amide or arylamide. Xaa is preferably Ala, but may be most amino acids including Pro (slow action). When a terminal hydrophobic residue is followed by a prolyl residue, the two may be released as an intact Xaa-Pro dipeptide.. Its function is as follows. Aminopeptidase with broad substrate specificity to several peptides. It has more affinity for oligopeptides than for dipeptides. It plays an essential role in the metabolism, it may be involved in nitrogen supply or protein turnover. The sequence is that of Aminopeptidase N (pepN) from Lactococcus lactis subsp. cremoris (Streptococcus cremoris).